The sequence spans 877 residues: Alanine--tRNA ligase (877 aa).

Zn(2+) contacts are provided by His562, His566, Cys664, and His668.

The protein belongs to the class-II aminoacyl-tRNA synthetase family. Zn(2+) is required as a cofactor.

Its subcellular location is the cytoplasm. The enzyme catalyses tRNA(Ala) + L-alanine + ATP = L-alanyl-tRNA(Ala) + AMP + diphosphate. Catalyzes the attachment of alanine to tRNA(Ala) in a two-step reaction: alanine is first activated by ATP to form Ala-AMP and then transferred to the acceptor end of tRNA(Ala). Also edits incorrectly charged Ser-tRNA(Ala) and Gly-tRNA(Ala) via its editing domain. The protein is Alanine--tRNA ligase of Picosynechococcus sp. (strain ATCC 27264 / PCC 7002 / PR-6) (Agmenellum quadruplicatum).